A 401-amino-acid chain; its full sequence is Dual-specificity RNA methyltransferase RlmN (401 aa).

E114 acts as the Proton acceptor in catalysis. The Radical SAM core domain maps to 120 to 365 (DKGRGTLCVS…TIVRRTRGDD (246 aa)). C127 and C370 are oxidised to a cystine. Residues C134, C138, and C141 each contribute to the [4Fe-4S] cluster site. Residues 187 to 188 (GE), S219, 241 to 243 (SLH), and N327 each bind S-adenosyl-L-methionine. C370 (S-methylcysteine intermediate) is an active-site residue.

This sequence belongs to the radical SAM superfamily. RlmN family. [4Fe-4S] cluster serves as cofactor.

The protein localises to the cytoplasm. It carries out the reaction adenosine(2503) in 23S rRNA + 2 reduced [2Fe-2S]-[ferredoxin] + 2 S-adenosyl-L-methionine = 2-methyladenosine(2503) in 23S rRNA + 5'-deoxyadenosine + L-methionine + 2 oxidized [2Fe-2S]-[ferredoxin] + S-adenosyl-L-homocysteine. The enzyme catalyses adenosine(37) in tRNA + 2 reduced [2Fe-2S]-[ferredoxin] + 2 S-adenosyl-L-methionine = 2-methyladenosine(37) in tRNA + 5'-deoxyadenosine + L-methionine + 2 oxidized [2Fe-2S]-[ferredoxin] + S-adenosyl-L-homocysteine. In terms of biological role, specifically methylates position 2 of adenine 2503 in 23S rRNA and position 2 of adenine 37 in tRNAs. m2A2503 modification seems to play a crucial role in the proofreading step occurring at the peptidyl transferase center and thus would serve to optimize ribosomal fidelity. This is Dual-specificity RNA methyltransferase RlmN from Xanthomonas oryzae pv. oryzae (strain MAFF 311018).